We begin with the raw amino-acid sequence, 529 residues long: VIN3-like protein 3 (529 aa).

The Nuclear localization signal motif lies at 97 to 104 (PKRQKRDL). Residues 137–207 (RCSCCICFKY…CFNCVSCGKT (71 aa)) form a PHD-type zinc finger. A Nuclear localization signal motif is present at residues 214–221 (LKKQLIIA). Positions 312-411 (GSMKIRIESV…FIVSTKTLQD (100 aa)) constitute a Fibronectin type-III domain. The segment at 421–529 (MSNCNNANKM…AGVSLILLQD (109 aa)) is VIN3-Interacting Domain (VID).

As to quaternary structure, interacts with VIN3.

It localises to the nucleus. Functionally, involved in both the vernalization and photoperiod pathways by regulating gene expression. The polypeptide is VIN3-like protein 3 (VIL3) (Arabidopsis thaliana (Mouse-ear cress)).